A 444-amino-acid chain; its full sequence is Glutamate-1-semialdehyde 2,1-aminomutase (444 aa).

At Lys267 the chain carries N6-(pyridoxal phosphate)lysine.

It belongs to the class-III pyridoxal-phosphate-dependent aminotransferase family. HemL subfamily. In terms of assembly, homodimer. It depends on pyridoxal 5'-phosphate as a cofactor.

The protein resides in the cytoplasm. The catalysed reaction is (S)-4-amino-5-oxopentanoate = 5-aminolevulinate. Its pathway is porphyrin-containing compound metabolism; protoporphyrin-IX biosynthesis; 5-aminolevulinate from L-glutamyl-tRNA(Glu): step 2/2. In Xylella fastidiosa (strain 9a5c), this protein is Glutamate-1-semialdehyde 2,1-aminomutase.